The primary structure comprises 217 residues: MAQKINPLGFRLGVTQNDRSHWFAQQRNYSKDLREDQKIRTCIENYVRTHIKSSSNYGGIARVEIRRKIDLIQVKIYIGFPNLLLIEGRGQGIEKLRNDVLNMLDSADRKLHIAIEKVAKPYRKPNILAEYIALQLEKRVPFRKTMKKAIELAEREEVEGIQIQIAGRLDGKEIARVEWDRGGRVPLQTIRARIDYCYYPVQTIYGVLGIKIWILEE.

Residues 47 to 119 (VRTHIKSSSN…KLHIAIEKVA (73 aa)) enclose the KH type-2 domain.

Belongs to the universal ribosomal protein uS3 family. In terms of assembly, part of the 30S ribosomal subunit.

It is found in the plastid. It localises to the chloroplast. This chain is Small ribosomal subunit protein uS3c (rps3), found in Pinus koraiensis (Korean pine).